We begin with the raw amino-acid sequence, 178 residues long: Nucleoplasmin-3 (178 aa).

Position 2 is an N-acetylalanine (alanine 2). Phosphoserine occurs at positions 13 and 16. An Omega-N-methylarginine modification is found at arginine 27. The disordered stretch occupies residues 141 to 178 (TMSNDVSEEESEEEEEDSDEEEVELCPILPAKKQGGRP). Residues 146–164 (VSEEESEEEEEDSDEEEVE) show a composition bias toward acidic residues. Phosphoserine is present on residues serine 147, serine 151, and serine 158.

Belongs to the nucleoplasmin family. Interacts with NPM (via N-terminus). Forms a pentamer with NPM at a ratio 4:1 (NPM3/NPM). Two pentamers form a decamer. Phosphorylated. As to expression, ubiquitous.

It localises to the nucleus. The protein resides in the nucleolus. In terms of biological role, plays a role in the regulation of diverse cellular processes such as ribosome biogenesis, chromatin remodeling or protein chaperoning. Modulates the histone chaperone function and the RNA-binding activity of nucleolar phosphoprotein B23/NPM. Efficiently mediates chromatin remodeling when included in a pentamer containing NPM3 and NPM. In Homo sapiens (Human), this protein is Nucleoplasmin-3 (NPM3).